The following is a 24-amino-acid chain: Heptapoietin A light chain (24 aa).

As to quaternary structure, heterodimer of a heavy and a light chain linked by disulfide bond(s).

Functionally, HPTA is an acidic heparin-binding growth factor for hepatocytes. This is Heptapoietin A light chain from Oryctolagus cuniculus (Rabbit).